Consider the following 1169-residue polypeptide: Pesticidal crystal protein Cry1Gb (1169 aa).

The protein belongs to the delta endotoxin family.

Promotes colloidosmotic lysis by binding to the midgut epithelial cells of lepidopteran larvae. Toxic to Pieris rapae. This is Pesticidal crystal protein Cry1Gb (cry1Gb) from Bacillus thuringiensis subsp. wuhanensis.